Here is a 498-residue protein sequence, read N- to C-terminus: L-amino acid oxidase (498 aa).

Positions 1–11 are cleaved as a signal peptide; the sequence is SLLFLAAVGSC. A disulfide bridge connects residues C21 and C184. Residues 54 to 55, 74 to 75, 74 to 78, R82, and 98 to 101 contribute to the FAD site; these read MS, EA, EASER, and GPMR. R101 is a binding site for substrate. N183 carries N-linked (GlcNAc...) asparagine glycosylation. Position 234 (H234) interacts with substrate. V272 serves as a coordination point for FAD. An intrachain disulfide couples C342 to C423. Substrate is bound at residue Y383. FAD contacts are provided by residues E468, 475–480, and 476–480; these read GWIDST and WIDST. Residue 475 to 476 participates in substrate binding; sequence GW.

The protein belongs to the flavin monoamine oxidase family. FIG1 subfamily. In terms of assembly, homodimer; non-covalently linked. FAD serves as cofactor. N-glycosylated. Contains 18.73% carbohydrates. Expressed by the venom gland.

It localises to the secreted. The catalysed reaction is an L-alpha-amino acid + O2 + H2O = a 2-oxocarboxylate + H2O2 + NH4(+). It catalyses the reaction L-leucine + O2 + H2O = 4-methyl-2-oxopentanoate + H2O2 + NH4(+). Its activity is regulated as follows. Strongly inhibited by glutathione, and moderately inhibited by PMSF, acetate iodine and glutamic acid. Is also inhibited by Zn(2+) ions, but not by Ca(2+), Mg(2+) and Mn(2+). Catalyzes an oxidative deamination of predominantly hydrophobic and aromatic L-amino acids, thus producing hydrogen peroxide that may contribute to the diverse toxic effects of this enzyme. This enzyme shows activity on L-Leu. This enzyme inhibits platelet aggregation in human platelet rich plasma induced by ADP (IC(50)=3.2 mg/mL), and shows antibacterial activities on both Gram-positive and Gram-negative bacteria (P.aeruginosa, V.cholerae, S.aureus, E.faecalis and E.coli). These two effects are due to hydrogen peroxide, since they are inhibited by catalase. It also induces edema in mouse paw pads but does not show hemolytic activity. This protein may also have activities in hemorrhage, and apoptosis. The sequence is that of L-amino acid oxidase from Bothrops pictus (Desert lancehead).